An 802-amino-acid chain; its full sequence is Putative flavin carrier protein 3 (802 aa).

The signal sequence occupies residues 1–28 (MRFLQVYKSSALIGLIILLASKVNLAEA). Residues 29–169 (KRKLVATSLV…YFSNGKTVSQ (141 aa)) lie on the Lumenal side of the membrane. An N-linked (GlcNAc...) asparagine glycan is attached at Asn-149. Residues 170 to 190 (IGVKWATAVVAGIGLLLSAIL) traverse the membrane as a helical segment. Over 191–200 (STFGNSTAAS) the chain is Cytoplasmic. The chain crosses the membrane as a helical span at residues 201-221 (HISANTMSLFLYFQSVVVVAM). Over 222–229 (QHVHRVPP) the chain is Lumenal. A helical transmembrane segment spans residues 230 to 250 (IAAAWAENLVWSMGLIRISFM). The Cytoplasmic portion of the chain corresponds to 251–255 (QRIFR). Residues 256 to 278 (WYVQSTGGTPSLYLTSTSMSVLA) form a helical membrane-spanning segment. Residues 279–323 (QRSWQYLMELPLIKRATNVLYGNANTLIFRGIKRLGYKMGIENTS) lie on the Lumenal side of the membrane. Asn-321 carries an N-linked (GlcNAc...) asparagine glycan. Residues 324–344 (IVCTGFTFFVLCGYVLAGFII) traverse the membrane as a helical segment. At 345–377 (VFKCCVELATRLGWIQKARFWEFRKQWRMILKG) the chain is on the cytoplasmic side. Residues 378–398 (ALLRYIYIGFVQLTILSFWEF) form a helical membrane-spanning segment. The Lumenal segment spans residues 399 to 405 (TERDSPA). The chain crosses the membrane as a helical span at residues 406–426 (VIVIACLFILLSCGLMLWAAW). Residues 427-467 (RTVFFARRSVALYNNPAALLYGDEYVLHKYGFFYTMFNANH) are Cytoplasmic-facing. A helical membrane pass occupies residues 468–488 (YWWNIVLLSYIFVKSLLVGFA). Topologically, residues 489–495 (QASGQTQ) are lumenal. A helical transmembrane segment spans residues 496–516 (VLFMFILDLFYFVAIIYYKPY). The Cytoplasmic portion of the chain corresponds to 517-525 (LDRPTNIMN). Residues 526 to 546 (ILIATVTVVNSFLFMFFSDLF) form a helical membrane-spanning segment. Asn-547 carries an N-linked (GlcNAc...) asparagine glycan. Topologically, residues 547–557 (NQSYKVAAIMG) are lumenal. The chain crosses the membrane as a helical span at residues 558–578 (WIFFIMNAAFSFILLMMILAF). Over 579 to 802 (AGMMLFSKNP…PPGFFDEGFM (224 aa)) the chain is Cytoplasmic. 2 positions are modified to phosphoserine: Ser-616 and Ser-635. A disordered region spans residues 629–802 (KDHDDNSDYE…PPGFFDEGFM (174 aa)). 3 stretches are compositionally biased toward polar residues: residues 653–663 (DETTPTTVTSS), 697–717 (KQQT…STLG), and 761–788 (DTSS…NNKQ). Phosphoserine is present on residues Ser-779 and Ser-782.

It belongs to the transient receptor potential (TRP) ion channel family.

It is found in the endoplasmic reticulum membrane. Its function is as follows. May be responsible for the transport of FAD into the endoplasmic reticulum lumen, where it is required for oxidative protein folding. The chain is Putative flavin carrier protein 3 (FLC3) from Saccharomyces cerevisiae (strain ATCC 204508 / S288c) (Baker's yeast).